A 172-amino-acid polypeptide reads, in one-letter code: R-phycocyanin beta subunit (172 aa).

Position 72 is an N4-methylasparagine (N72). Position 82 (C82) interacts with (2R,3E)-phycocyanobilin. Residue C153 participates in (2R,3E)-phycoerythrobilin binding.

Belongs to the phycobiliprotein family. As to quaternary structure, heterodimer of an alpha and a beta subunit, which further assembles into trimers and the trimers into hexamers. In terms of processing, contains two covalently linked bilin chromophores.

The protein resides in the cellular thylakoid membrane. Functionally, light-harvesting photosynthetic bile pigment-protein from the phycobiliprotein complex (phycobilisome, PBS). Phycocyanin is the major phycobiliprotein in the PBS rod. The chain is R-phycocyanin beta subunit (rpcB) from Synechococcus sp. (strain WH7803).